Reading from the N-terminus, the 66-residue chain is Large ribosomal subunit protein bL35 (66 aa).

The segment covering 1-15 (MPKMKTKSSAKKRFK) has biased composition (basic residues). A disordered region spans residues 1-32 (MPKMKTKSSAKKRFKMTATGKVRAGQAGKRHG).

The protein belongs to the bacterial ribosomal protein bL35 family.

In Dinoroseobacter shibae (strain DSM 16493 / NCIMB 14021 / DFL 12), this protein is Large ribosomal subunit protein bL35.